A 240-amino-acid polypeptide reads, in one-letter code: Ribonuclease PH (240 aa).

Residues Arg87 and 125–127 (GTR) contribute to the phosphate site.

It belongs to the RNase PH family. Homohexameric ring arranged as a trimer of dimers.

It catalyses the reaction tRNA(n+1) + phosphate = tRNA(n) + a ribonucleoside 5'-diphosphate. Functionally, phosphorolytic 3'-5' exoribonuclease that plays an important role in tRNA 3'-end maturation. Removes nucleotide residues following the 3'-CCA terminus of tRNAs; can also add nucleotides to the ends of RNA molecules by using nucleoside diphosphates as substrates, but this may not be physiologically important. Probably plays a role in initiation of 16S rRNA degradation (leading to ribosome degradation) during starvation. In Pseudomonas syringae pv. tomato (strain ATCC BAA-871 / DC3000), this protein is Ribonuclease PH.